A 293-amino-acid polypeptide reads, in one-letter code: Undecaprenyl-diphosphatase (293 aa).

6 consecutive transmembrane segments (helical) span residues V74–F94, W107–I127, M134–M154, F209–A229, V243–V263, and F271–L291.

The protein belongs to the UppP family.

Its subcellular location is the cell membrane. The catalysed reaction is di-trans,octa-cis-undecaprenyl diphosphate + H2O = di-trans,octa-cis-undecaprenyl phosphate + phosphate + H(+). In terms of biological role, catalyzes the dephosphorylation of undecaprenyl diphosphate (UPP). Confers resistance to bacitracin. This Corynebacterium glutamicum (strain R) protein is Undecaprenyl-diphosphatase.